The following is a 476-amino-acid chain: Membrane-bound lytic murein transglycosylase F (476 aa).

A signal peptide spans 1–22 (MTRFLFALILGFLLTACQQVTV). The segment at 23 to 257 (DETEFVPKKL…HLNEKYFGHV (235 aa)) is non-LT domain. Positions 258–476 (KRFDYVDTRA…AGTLSPEQPK (219 aa)) are LT domain. Glutamate 302 is an active-site residue. The interval 446–476 (SKQQNPEEEPSDLASEEPAIPAGTLSPEQPK) is disordered. The span at 451-460 (PEEEPSDLAS) shows a compositional bias: acidic residues.

It in the N-terminal section; belongs to the bacterial solute-binding protein 3 family. This sequence in the C-terminal section; belongs to the transglycosylase Slt family.

It is found in the cell outer membrane. It catalyses the reaction Exolytic cleavage of the (1-&gt;4)-beta-glycosidic linkage between N-acetylmuramic acid (MurNAc) and N-acetylglucosamine (GlcNAc) residues in peptidoglycan, from either the reducing or the non-reducing ends of the peptidoglycan chains, with concomitant formation of a 1,6-anhydrobond in the MurNAc residue.. Functionally, murein-degrading enzyme that degrades murein glycan strands and insoluble, high-molecular weight murein sacculi, with the concomitant formation of a 1,6-anhydromuramoyl product. Lytic transglycosylases (LTs) play an integral role in the metabolism of the peptidoglycan (PG) sacculus. Their lytic action creates space within the PG sacculus to allow for its expansion as well as for the insertion of various structures such as secretion systems and flagella. In Shewanella baltica (strain OS155 / ATCC BAA-1091), this protein is Membrane-bound lytic murein transglycosylase F.